The following is a 184-amino-acid chain: Succinate dehydrogenase cytochrome b560 subunit, mitochondrial (184 aa).

A helical membrane pass occupies residues 65 to 94 (LTWMLSGFHRISGCVMAGTLLVGGLGFAVL). Over 95-114 (PLDFTTFVEYIRGWNLPCAV) the chain is Mitochondrial intermembrane. The chain crosses the membrane as a helical span at residues 115–139 (TAVFKYIIAFPIIFHTLNGIRFLGF). His129 provides a ligand contact to heme. The Mitochondrial matrix portion of the chain corresponds to 140–147 (DLAKGVDN). A helical transmembrane segment spans residues 148–169 (IGQVYKSGWLVFGVSAVIALAI). Topologically, residues 170-172 (VIN) are mitochondrial intermembrane.

This sequence belongs to the cytochrome b560 family. Component of complex II composed of four subunits: a flavoprotein (FP), iron-sulfur protein (IP), and a cytochrome b560 composed of two transmembrane proteins. The cofactor is heme.

The protein localises to the mitochondrion inner membrane. The protein operates within carbohydrate metabolism; tricarboxylic acid cycle. Its function is as follows. Membrane-anchoring subunit of succinate dehydrogenase (SDH) that is involved in complex II of the mitochondrial electron transport chain and is responsible for transferring electrons from succinate to ubiquinone (coenzyme Q). Mediates resistance to enteropathogenic E.coli infection. The sequence is that of Succinate dehydrogenase cytochrome b560 subunit, mitochondrial (mev-1) from Caenorhabditis briggsae.